A 260-amino-acid polypeptide reads, in one-letter code: Shikimate dehydrogenase (NADP(+)) (260 aa).

Shikimate is bound by residues 14–16 and Thr60; that span reads SAS. Catalysis depends on Lys64, which acts as the Proton acceptor. Positions 85 and 100 each coordinate shikimate. NADP(+) contacts are provided by residues 121-125, 145-150, and Phe201; these read GAGGA and NRTYER. Tyr203 contacts shikimate. Gly225 provides a ligand contact to NADP(+).

The protein belongs to the shikimate dehydrogenase family. As to quaternary structure, homodimer.

The catalysed reaction is shikimate + NADP(+) = 3-dehydroshikimate + NADPH + H(+). Its pathway is metabolic intermediate biosynthesis; chorismate biosynthesis; chorismate from D-erythrose 4-phosphate and phosphoenolpyruvate: step 4/7. Functionally, involved in the biosynthesis of the chorismate, which leads to the biosynthesis of aromatic amino acids. Catalyzes the reversible NADPH linked reduction of 3-dehydroshikimate (DHSA) to yield shikimate (SA). This chain is Shikimate dehydrogenase (NADP(+)), found in Pyrobaculum islandicum (strain DSM 4184 / JCM 9189 / GEO3).